The sequence spans 461 residues: Probable tubulin polyglutamylase TTLL9 (461 aa).

Polar residues predominate over residues 1 to 10 (MSRQKSQTSK). Residues 1 to 20 (MSRQKSQTSKGHGASKGKER) are disordered. A TTL domain is found at 22–402 (QRTLIRFKTT…EARLTGKEKR (381 aa)). ATP-binding positions include Lys-149 and 155-156 (QG). Position 155 (Gln-155) interacts with a protein. The span at 186–197 (QATRANVNPSGS) shows a compositional bias: polar residues. Residues 186-208 (QATRANVNPSGSHDTRSSDDQKD) form a disordered region. Positions 198–208 (HDTRSSDDQKD) are enriched in basic and acidic residues. Residues 218-221 (QRYV) and 231-233 (KFD) contribute to the ATP site. Position 257 (Arg-257) interacts with L-glutamate. Position 276–277 (276–277 (TN)) interacts with ATP. Lys-294 serves as a coordination point for L-glutamate. Asp-348, Glu-361, and Asn-363 together coordinate Mg(2+). Position 379 (Lys-379) interacts with L-glutamate.

Belongs to the tubulin--tyrosine ligase family. Requires Mg(2+) as cofactor.

It localises to the cytoplasm. It is found in the cytoskeleton. Its subcellular location is the cilium basal body. The protein resides in the flagellum axoneme. It carries out the reaction (L-glutamyl)(n)-gamma-L-glutamyl-L-glutamyl-[protein] + L-glutamate + ATP = (L-glutamyl)(n+1)-gamma-L-glutamyl-L-glutamyl-[protein] + ADP + phosphate + H(+). Functionally, probable tubulin polyglutamylase that generates side chains of glutamate on the gamma-carboxyl group of specific glutamate residues within the C-terminal tail of target proteins. Similar to TTLL1, may acquire enzymatic activity only in complex with other proteins as it is most likely lacking domains important for autonomous activity. Mediates tubulin polyglutamylation which induces establishment of microtubule heterogeneity in sperm flagella, thereby playing a role in normal motile flagella axoneme structure and sperm flagella beating pattern. This chain is Probable tubulin polyglutamylase TTLL9 (Ttll9), found in Rattus norvegicus (Rat).